A 447-amino-acid polypeptide reads, in one-letter code: Ameloblastin (447 aa).

The first 26 residues, 1 to 26, serve as a signal peptide directing secretion; it reads MSASKIPLFKMKDLILILCLLEMSFA. Position 37 is a hydroxyproline (Pro-37). A Phosphoserine modification is found at Ser-43. O-linked (GalNAc...) serine glycosylation is present at Ser-112. 3 disordered regions span residues 165 to 211, 307 to 338, and 353 to 383; these read QQVA…DFAD, DSPV…NLEN, and LLAL…PAAA. A run of 2 repeats spans residues 189 to 201 and 202 to 214.

This sequence belongs to the ameloblastin family. As to expression, ameloblast-specific. Located at the Tomes processes of secretory ameloblasts and in the sheath space between rod-interrod enamel.

The protein localises to the secreted. It is found in the extracellular space. Its subcellular location is the extracellular matrix. Functionally, involved in the mineralization and structural organization of enamel. This chain is Ameloblastin (AMBN), found in Homo sapiens (Human).